The following is a 945-amino-acid chain: Isoleucine--tRNA ligase (945 aa).

The short motif at 66–76 (PYANGDIHLGH) is the 'HIGH' region element. An L-isoleucyl-5'-AMP-binding site is contributed by E581. A 'KMSKS' region motif is present at residues 622–626 (KMSKS). Residue K625 coordinates ATP. Residues C908, C911, C928, and C931 each coordinate Zn(2+).

The protein belongs to the class-I aminoacyl-tRNA synthetase family. IleS type 1 subfamily. In terms of assembly, monomer. It depends on Zn(2+) as a cofactor.

Its subcellular location is the cytoplasm. It carries out the reaction tRNA(Ile) + L-isoleucine + ATP = L-isoleucyl-tRNA(Ile) + AMP + diphosphate. Functionally, catalyzes the attachment of isoleucine to tRNA(Ile). As IleRS can inadvertently accommodate and process structurally similar amino acids such as valine, to avoid such errors it has two additional distinct tRNA(Ile)-dependent editing activities. One activity is designated as 'pretransfer' editing and involves the hydrolysis of activated Val-AMP. The other activity is designated 'posttransfer' editing and involves deacylation of mischarged Val-tRNA(Ile). This Paraburkholderia xenovorans (strain LB400) protein is Isoleucine--tRNA ligase.